Consider the following 380-residue polypeptide: Kappa-type opioid receptor (380 aa).

Over 1 to 57 the chain is Extracellular; it reads MDSPIQIFRGEPGPTCAPSACLPPNSSAWFPGWAEPDSNGSAGSEDAQLEPAHISPA. N-linked (GlcNAc...) asparagine glycosylation is found at Asn25 and Asn39. The chain crosses the membrane as a helical span at residues 58–85; it reads IPVIITAVYSVVFVVGLVGNSLVMFVII. Residues 86–95 lie on the Cytoplasmic side of the membrane; the sequence is RYTKMKTATN. The helical transmembrane segment at 96 to 119 threads the bilayer; the sequence is IYIFNLALADALVTTTMPFQSTVY. Residues 120–132 are Extracellular-facing; it reads LMNSWPFGDVLCK. Cysteines 131 and 210 form a disulfide. Residues 133 to 154 form a helical membrane-spanning segment; that stretch reads IVISIDYYNMFTSIFTLTMMSV. At 155–173 the chain is on the cytoplasmic side; sequence DRYIAVCHPVKALDFRTPL. The helical transmembrane segment at 174 to 196 threads the bilayer; it reads KAKIINICIWLLSSSVGISAIVL. The Extracellular portion of the chain corresponds to 197–222; it reads GGTKVREDVDVIECSLQFPDDDYSWW. The chain crosses the membrane as a helical span at residues 223-247; sequence DLFMKICVFIFAFVIPVLIIIVCYT. The Cytoplasmic portion of the chain corresponds to 248–274; that stretch reads LMILRLKSVRLLSGSREKDRNLRRITR. The chain crosses the membrane as a helical span at residues 275–296; it reads LVLVVVAVFVVCWTPIHIFILV. The Extracellular portion of the chain corresponds to 297–311; that stretch reads EALGSTSHSTAALSS. A helical transmembrane segment spans residues 312-333; it reads YYFCIALGYTNSSLNPILYAFL. Residues 334 to 380 lie on the Cytoplasmic side of the membrane; that stretch reads DENFKRCFRDFCFPLKMRMERQSTSRVRNTVQDPAYLRDIDGMNKPV. Cys345 carries S-palmitoyl cysteine lipidation.

The protein belongs to the G-protein coupled receptor 1 family. Interacts with NHERF1. Interacts with GABARAPL1. In terms of tissue distribution, detected in brain and placenta.

The protein resides in the cell membrane. Functionally, G-protein coupled opioid receptor that functions as a receptor for endogenous alpha-neoendorphins and dynorphins, but has low affinity for beta-endorphins. Also functions as a receptor for various synthetic opioids and for the psychoactive diterpene salvinorin A. Ligand binding causes a conformation change that triggers signaling via guanine nucleotide-binding proteins (G proteins) and modulates the activity of down-stream effectors, such as adenylate cyclase. Signaling leads to the inhibition of adenylate cyclase activity. Inhibits neurotransmitter release by reducing calcium ion currents and increasing potassium ion conductance. Plays a role in the perception of pain. Plays a role in mediating reduced physical activity upon treatment with synthetic opioids. Plays a role in the regulation of salivation in response to synthetic opioids. May play a role in arousal and regulation of autonomic and neuroendocrine functions. The sequence is that of Kappa-type opioid receptor (OPRK1) from Homo sapiens (Human).